Here is a 216-residue protein sequence, read N- to C-terminus: LexA repressor (216 aa).

The H-T-H motif DNA-binding region spans 29 to 49; that stretch reads RAEIAQALGFRSPNAAEDHLK. Active-site for autocatalytic cleavage activity residues include Ser134 and Lys171.

It belongs to the peptidase S24 family. In terms of assembly, homodimer.

The catalysed reaction is Hydrolysis of Ala-|-Gly bond in repressor LexA.. In terms of biological role, represses a number of genes involved in the response to DNA damage (SOS response), including recA and lexA. In the presence of single-stranded DNA, RecA interacts with LexA causing an autocatalytic cleavage which disrupts the DNA-binding part of LexA, leading to derepression of the SOS regulon and eventually DNA repair. The protein is LexA repressor of Bordetella parapertussis (strain 12822 / ATCC BAA-587 / NCTC 13253).